The primary structure comprises 555 residues: Urocanate hydratase (555 aa).

NAD(+) is bound by residues 52 to 53, glutamine 130, 176 to 178, glutamate 196, arginine 201, 242 to 243, 263 to 267, 273 to 274, and tyrosine 322; these read GG, GMG, NA, QTSAH, and YL. The active site involves cysteine 410. Glycine 492 contributes to the NAD(+) binding site.

Belongs to the urocanase family. The cofactor is NAD(+).

It is found in the cytoplasm. The catalysed reaction is 4-imidazolone-5-propanoate = trans-urocanate + H2O. The protein operates within amino-acid degradation; L-histidine degradation into L-glutamate; N-formimidoyl-L-glutamate from L-histidine: step 2/3. Its function is as follows. Catalyzes the conversion of urocanate to 4-imidazolone-5-propionate. The sequence is that of Urocanate hydratase from Shewanella baltica (strain OS155 / ATCC BAA-1091).